We begin with the raw amino-acid sequence, 228 residues long: Ribonuclease 3 (228 aa).

The RNase III domain occupies 7–136 (LNKLKNEYNI…FNGALFLDQG (130 aa)). Glutamate 49 is a Mg(2+) binding site. Aspartate 53 is an active-site residue. Residues aspartate 122 and glutamate 125 each coordinate Mg(2+). Glutamate 125 is an active-site residue. The DRBM domain maps to 162-228 (DYKTDLQELL…AAKAALQKFE (67 aa)). The tract at residues 207 to 228 (GEGHNKKAAEQQAAKAALQKFE) is disordered. The segment covering 216–228 (EQQAAKAALQKFE) has biased composition (low complexity).

Belongs to the ribonuclease III family. In terms of assembly, homodimer. Requires Mg(2+) as cofactor.

It localises to the cytoplasm. It carries out the reaction Endonucleolytic cleavage to 5'-phosphomonoester.. Its function is as follows. Digests double-stranded RNA. Involved in the processing of primary rRNA transcript to yield the immediate precursors to the large and small rRNAs (23S and 16S). Processes some mRNAs, and tRNAs when they are encoded in the rRNA operon. Processes pre-crRNA and tracrRNA of type II CRISPR loci if present in the organism. In Lactobacillus acidophilus (strain ATCC 700396 / NCK56 / N2 / NCFM), this protein is Ribonuclease 3.